Here is a 507-residue protein sequence, read N- to C-terminus: Probable DNA ligase (507 aa).

ATP is bound at residue Glu209. The N6-AMP-lysine intermediate role is filled by Lys211. 6 residues coordinate ATP: Arg216, Arg231, Glu260, Phe295, Arg366, and Lys372.

The protein belongs to the ATP-dependent DNA ligase family. The cofactor is Mg(2+).

It catalyses the reaction ATP + (deoxyribonucleotide)n-3'-hydroxyl + 5'-phospho-(deoxyribonucleotide)m = (deoxyribonucleotide)n+m + AMP + diphosphate.. Its function is as follows. DNA ligase that seals nicks in double-stranded DNA during DNA replication, DNA recombination and DNA repair. The protein is Probable DNA ligase of Pseudarthrobacter chlorophenolicus (strain ATCC 700700 / DSM 12829 / CIP 107037 / JCM 12360 / KCTC 9906 / NCIMB 13794 / A6) (Arthrobacter chlorophenolicus).